Consider the following 152-residue polypeptide: Transcription factor ATOH7 (152 aa).

Positions 40-92 (RRRLAANARERRRMQGLNTAFDRLRRVVPQWGQDKKLSKYETLQMALSYIMAL) constitute a bHLH domain.

Forms a heterodimer with TCF3 isoform E47; interaction may be required for DNA-binding in certain situations.

Its subcellular location is the nucleus. It is found in the perikaryon. The protein resides in the cell projection. The protein localises to the axon. In terms of biological role, transcription factor that binds to DNA at the consensus sequence 5'-CAG[GC]TG-3'. Dimerization with TCF3 isoform E47 may be required in certain situations. Binds to gene promoters and enhancer elements, and thereby regulates a transcriptional program of retinal ganglion cell (RGC) determinant genes. Although the exact mechanism is not certain, retinal transcription regulation by ATOH7 has a role in RGC determination and survival, photoreceptor population development, targeting of RGC axons to the optic nerve and development of the retino-hypothalamic tract. Binds to its own promoter and enhancer sequences, suggesting autoregulation of ATOH7 transcription. Required for retinal circadian rhythm photoentrainment. Plays a role in brainstem auditory signaling and binaural processing. This chain is Transcription factor ATOH7, found in Homo sapiens (Human).